Reading from the N-terminus, the 119-residue chain is Aspartate 1-decarboxylase (119 aa).

The Schiff-base intermediate with substrate; via pyruvic acid role is filled by S25. At S25 the chain carries Pyruvic acid (Ser). A substrate-binding site is contributed by T57. Catalysis depends on Y58, which acts as the Proton donor. 73 to 75 contributes to the substrate binding site; it reads GAA.

The protein belongs to the PanD family. Heterooctamer of four alpha and four beta subunits. It depends on pyruvate as a cofactor. In terms of processing, is synthesized initially as an inactive proenzyme, which is activated by self-cleavage at a specific serine bond to produce a beta-subunit with a hydroxyl group at its C-terminus and an alpha-subunit with a pyruvoyl group at its N-terminus.

It localises to the cytoplasm. The catalysed reaction is L-aspartate + H(+) = beta-alanine + CO2. It participates in cofactor biosynthesis; (R)-pantothenate biosynthesis; beta-alanine from L-aspartate: step 1/1. In terms of biological role, catalyzes the pyruvoyl-dependent decarboxylation of aspartate to produce beta-alanine. The sequence is that of Aspartate 1-decarboxylase from Herminiimonas arsenicoxydans.